We begin with the raw amino-acid sequence, 500 residues long: Glutamyl-tRNA(Gln) amidotransferase subunit A (500 aa).

Residues Lys-93 and Ser-168 each act as charge relay system in the active site. Ser-192 functions as the Acyl-ester intermediate in the catalytic mechanism.

Belongs to the amidase family. GatA subfamily. As to quaternary structure, heterotrimer of A, B and C subunits.

It catalyses the reaction L-glutamyl-tRNA(Gln) + L-glutamine + ATP + H2O = L-glutaminyl-tRNA(Gln) + L-glutamate + ADP + phosphate + H(+). Its function is as follows. Allows the formation of correctly charged Gln-tRNA(Gln) through the transamidation of misacylated Glu-tRNA(Gln) in organisms which lack glutaminyl-tRNA synthetase. The reaction takes place in the presence of glutamine and ATP through an activated gamma-phospho-Glu-tRNA(Gln). This Corynebacterium jeikeium (strain K411) protein is Glutamyl-tRNA(Gln) amidotransferase subunit A.